The sequence spans 472 residues: MNWMSFAPELITLTSALWFLLLSMTARSDPKREHVAALVLSALGLAACLASVGAEGYCFAGAYKVDLFSQVFKVLLAAGLFLIVTLCGELSDIEERNRREFYVLLFVCTLAMMLLVGANHFLVVFISLELSSYSLYVLVALRRDRGLGLEAGIKYFLVGIFASGVMIFGLALLYGASGIAALDGMARVLPGIIHQPAVVIGLLLTLSGFFFKLAVFPFHFWAPDAYQGAANQVSAYIATASKVAAIGVLVRVIASAGDGGTYLVHVLAVLSVVSMTVGNLAAIAQQDLKRLLAYSTVAHAGYVLIGVLSMNPAGYSAAVFYAFALLVMKFTAFLVLVEVASDGGNLRVEELAGLHRRSPILALALMVSLFSLAGIPPTVGFTGKFLVFVAAMGEGHFTLVLIAMINVVISLYYYLLVIKAAYLLEPRQELPALRVSPPLKLLSGVLVIAMVAAGFFPNQIIRVAESAAKALL.

A run of 13 helical transmembrane segments spans residues 3-23 (WMSFAPELITLTSALWFLLLS), 34-54 (HVAALVLSALGLAACLASVGA), 67-87 (LFSQVFKVLLAAGLFLIVTLC), 106-126 (FVCTLAMMLLVGANHFLVVFI), 156-176 (FLVGIFASGVMIFGLALLYGA), 198-218 (VVIGLLLTLSGFFFKLAVFPF), 233-253 (VSAYIATASKVAAIGVLVRVI), 263-283 (LVHVLAVLSVVSMTVGNLAAI), 291-311 (LLAYSTVAHAGYVLIGVLSMN), 317-337 (AAVFYAFALLVMKFTAFLVLV), 360-380 (ILALALMVSLFSLAGIPPTVG), 398-418 (TLVLIAMINVVISLYYYLLVI), and 441-461 (LLSGVLVIAMVAAGFFPNQII).

This sequence belongs to the complex I subunit 2 family. In terms of assembly, NDH-1 is composed of 14 different subunits. Subunits NuoA, H, J, K, L, M, N constitute the membrane sector of the complex.

It localises to the cell inner membrane. It carries out the reaction a quinone + NADH + 5 H(+)(in) = a quinol + NAD(+) + 4 H(+)(out). In terms of biological role, NDH-1 shuttles electrons from NADH, via FMN and iron-sulfur (Fe-S) centers, to quinones in the respiratory chain. The immediate electron acceptor for the enzyme in this species is believed to be ubiquinone. Couples the redox reaction to proton translocation (for every two electrons transferred, four hydrogen ions are translocated across the cytoplasmic membrane), and thus conserves the redox energy in a proton gradient. The polypeptide is NADH-quinone oxidoreductase subunit N 2 (Syntrophobacter fumaroxidans (strain DSM 10017 / MPOB)).